A 1060-amino-acid chain; its full sequence is Desmoglein-1-beta (1060 aa).

An N-terminal signal peptide occupies residues 1–23 (MDWHSFRIAALLLTSLVVLEVNS). The propeptide occupies 24-49 (EFQIQVRDHNAKNGTIKWHSIRRQKR). Cadherin domains lie at 50–157 (EWIK…PPVF), 158–269 (SMTT…IPYL), 270–389 (EQSS…RPGS), and 386–493 (RPGS…PGSD). Over 50-567 (EWIKFAAACR…ITEDNVHFGP (518 aa)) the chain is Extracellular. An N-linked (GlcNAc...) (high mannose) asparagine glycan is attached at asparagine 110. A glycan (N-linked (GlcNAc...) asparagine) is linked at asparagine 180. The tract at residues 490 to 560 (PGSDGGGSSS…PEPEPFDITE (71 aa)) is disordered. Over residues 492–503 (SDGGGSSSGSGG) the composition is skewed to gly residues. Over residues 510-519 (NGYQGTSTVG) the composition is skewed to polar residues. Residues 525-537 (GSGGVTSSGGGSG) show a composition bias toward gly residues. Acidic residues predominate over residues 549–560 (DEPEPEPFDITE). A helical membrane pass occupies residues 568-588 (AGIGLLIMGFLVLGLVPFLLI). Residues 589–1060 (CCDCGGAPGG…TKYSTVQYSK (472 aa)) lie on the Cytoplasmic side of the membrane. Positions 792 to 801 (PDPDSSWPPQ) are enriched in low complexity. The disordered stretch occupies residues 792–811 (PDPDSSWPPQSTEPMCPQST). 5 Desmoglein repeat repeats span residues 835-861 (AYPSGPGVQHPLPIPDPLGYGNVTVRE), 862-891 (SYATSGTLKPSVHFHDNQQASNVVVTERVV), 892-921 (GPVPGADLHGMLEIPDLRDGTNVIVTERVI), 922-949 (APGSSLPTSLTIPNPRETSNVVVTERVI), and 950-978 (QPTSGMIGNLSMTPELSSAQNVIVTERVV).

Interacts with DSC3; there is evidence to suggest that the interaction promotes cell-cell adhesion of keratinocytes. In terms of tissue distribution, expressed in epidermis.

It is found in the cell membrane. It localises to the cell junction. Its subcellular location is the desmosome. The protein localises to the cytoplasm. The protein resides in the nucleus. Its function is as follows. Component of intercellular desmosome junctions. Involved in the interaction of plaque proteins and intermediate filaments mediating cell-cell adhesion. The protein is Desmoglein-1-beta (Dsg1b) of Mus musculus (Mouse).